The primary structure comprises 420 residues: Serine hydroxymethyltransferase (420 aa).

(6S)-5,6,7,8-tetrahydrofolate contacts are provided by residues Leu-121 and 125–127 (GHL). An N6-(pyridoxal phosphate)lysine modification is found at Lys-229. 355–357 (SPF) contacts (6S)-5,6,7,8-tetrahydrofolate.

This sequence belongs to the SHMT family. Homodimer. Pyridoxal 5'-phosphate serves as cofactor.

It localises to the cytoplasm. It catalyses the reaction (6R)-5,10-methylene-5,6,7,8-tetrahydrofolate + glycine + H2O = (6S)-5,6,7,8-tetrahydrofolate + L-serine. Its pathway is one-carbon metabolism; tetrahydrofolate interconversion. It functions in the pathway amino-acid biosynthesis; glycine biosynthesis; glycine from L-serine: step 1/1. Its function is as follows. Catalyzes the reversible interconversion of serine and glycine with tetrahydrofolate (THF) serving as the one-carbon carrier. This reaction serves as the major source of one-carbon groups required for the biosynthesis of purines, thymidylate, methionine, and other important biomolecules. Also exhibits THF-independent aldolase activity toward beta-hydroxyamino acids, producing glycine and aldehydes, via a retro-aldol mechanism. The sequence is that of Serine hydroxymethyltransferase from Chromohalobacter salexigens (strain ATCC BAA-138 / DSM 3043 / CIP 106854 / NCIMB 13768 / 1H11).